The following is a 408-amino-acid chain: S-adenosylmethionine synthase (408 aa).

Histidine 16 lines the ATP pocket. Aspartate 18 is a binding site for Mg(2+). K(+) is bound at residue glutamate 44. L-methionine-binding residues include glutamate 57 and glutamine 100. Residues 100–110 (QSPEINQGVSR) form a flexible loop region. Residues 177–179 (DGK), aspartate 257, 263–264 (RK), alanine 280, and lysine 284 contribute to the ATP site. Aspartate 257 contributes to the L-methionine binding site. Lysine 288 is a binding site for L-methionine.

The protein belongs to the AdoMet synthase family. In terms of assembly, homotetramer; dimer of dimers. Mg(2+) serves as cofactor. It depends on K(+) as a cofactor.

Its subcellular location is the cytoplasm. It carries out the reaction L-methionine + ATP + H2O = S-adenosyl-L-methionine + phosphate + diphosphate. It participates in amino-acid biosynthesis; S-adenosyl-L-methionine biosynthesis; S-adenosyl-L-methionine from L-methionine: step 1/1. Its function is as follows. Catalyzes the formation of S-adenosylmethionine (AdoMet) from methionine and ATP. The overall synthetic reaction is composed of two sequential steps, AdoMet formation and the subsequent tripolyphosphate hydrolysis which occurs prior to release of AdoMet from the enzyme. In Bifidobacterium animalis subsp. lactis (strain AD011), this protein is S-adenosylmethionine synthase.